A 290-amino-acid chain; its full sequence is UPF0761 membrane protein YihY (290 aa).

The Cytoplasmic portion of the chain corresponds to 1–43 (MLKTVHQKAGRHTRPVRAWLKLLWQRIDEDNMTTLAGNLAYVS). Residues 44-64 (LLSLVPLIAVVFALFAAFPMF) form a helical membrane-spanning segment. The Periplasmic segment spans residues 65–103 (SDVSIQLRHFIFANFMPATGDVIQRYIEQFVANSNKMTA). A helical transmembrane segment spans residues 104 to 124 (VGACGLIVTALLLMYAIDSAL). The Cytoplasmic portion of the chain corresponds to 125 to 139 (NTIWRSKRTRPKVYS). Residues 140-160 (FAVYWMILTLGPLLAGVSLAI) form a helical membrane-spanning segment. Topologically, residues 161–179 (SSYLLSLRWASDLNTVIDN) are periplasmic. The chain crosses the membrane as a helical span at residues 180–200 (VLHILPLLLSWISFWLLYSIV). Residues 201–209 (PTTRVPNRD) are Cytoplasmic-facing. The helical transmembrane segment at 210 to 230 (ALVGAFVAALLFEAGKKGFAL) threads the bilayer. At 231–243 (YITMFPSYQLIYG) the chain is on the periplasmic side. The helical transmembrane segment at 244-264 (VLAVIPILFVWVYWTWCIVLL) threads the bilayer. The Cytoplasmic segment spans residues 265–290 (GAEITVTLGEYRKLKQAAEQEEADQP).

Belongs to the UPF0761 family.

It localises to the cell inner membrane. The chain is UPF0761 membrane protein YihY from Salmonella typhimurium (strain LT2 / SGSC1412 / ATCC 700720).